We begin with the raw amino-acid sequence, 132 residues long: Cytochrome b5 (132 aa).

In terms of domain architecture, Cytochrome b5 heme-binding spans 2 to 78 (GKIFTLAEVA…LDEYYVGDID (77 aa)). Positions 37 and 61 each coordinate heme. The chain crosses the membrane as a helical span at residues 104-124 (FVIKLLQFLVPLVILAGAIGI).

This sequence belongs to the cytochrome b5 family.

It is found in the endoplasmic reticulum membrane. Its subcellular location is the microsome membrane. In terms of biological role, membrane bound hemoprotein which function as an electron carrier for several membrane bound oxygenases. The polypeptide is Cytochrome b5 (Borago officinalis (Bourrache)).